A 275-amino-acid chain; its full sequence is Hydroxyethylthiazole kinase (275 aa).

Position 57 (Met57) interacts with substrate. Arg132 and Ser178 together coordinate ATP. Gly205 provides a ligand contact to substrate.

It belongs to the Thz kinase family. It depends on Mg(2+) as a cofactor.

It catalyses the reaction 5-(2-hydroxyethyl)-4-methylthiazole + ATP = 4-methyl-5-(2-phosphooxyethyl)-thiazole + ADP + H(+). Its pathway is cofactor biosynthesis; thiamine diphosphate biosynthesis; 4-methyl-5-(2-phosphoethyl)-thiazole from 5-(2-hydroxyethyl)-4-methylthiazole: step 1/1. In terms of biological role, catalyzes the phosphorylation of the hydroxyl group of 4-methyl-5-beta-hydroxyethylthiazole (THZ). This Clavibacter sepedonicus (Clavibacter michiganensis subsp. sepedonicus) protein is Hydroxyethylthiazole kinase.